Here is a 419-residue protein sequence, read N- to C-terminus: Protein FAM217A (419 aa).

Disordered stretches follow at residues 1 to 60 (MGRK…LENP), 96 to 119 (KGSTVDKRNSSVEENVTDESDLSE), 236 to 299 (SSSK…SRAL), and 317 to 382 (KNSK…RTKK). The span at 7 to 19 (ESCSSSLHVSSIS) shows a compositional bias: low complexity. Residues 236–251 (SSSKAIATKAKAPKIP) are compositionally biased toward low complexity. Polar residues-rich tracts occupy residues 252–261 (ETSTLQTSGV) and 271–281 (NSGSGKPEQNV). Low complexity-rich tracts occupy residues 282-296 (SKWSLSSAGKSKSNS) and 334-345 (PTTTTQATQPMA).

It belongs to the FAM217 family.

The polypeptide is Protein FAM217A (Fam217a) (Mus musculus (Mouse)).